Consider the following 264-residue polypeptide: Galectin-3 (264 aa).

The interval methionine 1–proline 105 is disordered. Position 2 is an N-acetylalanine (alanine 2). Phosphoserine; by CK1 is present on serine 6. Tandem repeats lie at residues tyrosine 35–alanine 43, tyrosine 44–alanine 52, tyrosine 53–alanine 61, tyrosine 62–alanine 70, tyrosine 71–alanine 79, tyrosine 80–alanine 88, tyrosine 89–alanine 97, and phenylalanine 98–alanine 107. Residues tyrosine 35 to glycine 114 are 9 X 9 AA tandem repeats of Y-P-G-X(3)-P-[GS]-A. Residues glycine 37–glycine 46 show a composition bias toward low complexity. A compositionally biased stretch (pro residues) spans glutamine 47 to threonine 75. Positions alanine 76–proline 105 are enriched in low complexity. The stretch at tyrosine 108–glycine 114 is one 9; truncated repeat. Residues tyrosine 132–alanine 262 form the Galectin domain. Tryptophan 195–glutamine 201 contributes to the a beta-D-galactoside binding site. A Phosphoserine modification is found at serine 202. The Nuclear export signal motif lies at lysine 240–threonine 255.

As to quaternary structure, probably forms homo- or heterodimers. Interacts with DMBT1. Interacts with CD6 and ALCAM. Forms a complex with the ITGA3, ITGB1 and CSPG4. Interacts with LGALS3BP, LYPD3, ZFTRAF1 and UACA. Interacts with TRIM16; this interaction mediates autophagy of damage endomembranes. Interacts with and inhibits by binding NCR3/NKp30. In terms of tissue distribution, the highest levels are found in activated macrophages.

It is found in the cytoplasm. It localises to the nucleus. The protein localises to the secreted. In terms of biological role, galactose-specific lectin which binds IgE. May mediate with the alpha-3, beta-1 integrin the stimulation by CSPG4 of endothelial cells migration. Together with DMBT1, required for terminal differentiation of columnar epithelial cells during early embryogenesis. In the nucleus: acts as a pre-mRNA splicing factor. Involved in acute inflammatory responses including neutrophil activation and adhesion, chemoattraction of monocytes macrophages, opsonization of apoptotic neutrophils, and activation of mast cells. Together with TRIM16, coordinates the recognition of membrane damage with mobilization of the core autophagy regulators ATG16L1 and BECN1 in response to damaged endomembranes. When secreted, interacts with NK cell-activating receptor NCR3/NKp30 acting as an inhibitory ligand which antagonizes NK cell attack. This chain is Galectin-3 (Lgals3), found in Mus musculus (Mouse).